A 230-amino-acid chain; its full sequence is 3-dehydroquinate dehydratase (230 aa).

3-dehydroquinate is bound by residues S26, 51 to 53 (EIR), and R84. The active-site Proton donor/acceptor is H127. K150 acts as the Schiff-base intermediate with substrate in catalysis. R190, T209, and Q213 together coordinate 3-dehydroquinate.

This sequence belongs to the type-I 3-dehydroquinase family. Homodimer.

It carries out the reaction 3-dehydroquinate = 3-dehydroshikimate + H2O. Its pathway is metabolic intermediate biosynthesis; chorismate biosynthesis; chorismate from D-erythrose 4-phosphate and phosphoenolpyruvate: step 3/7. Involved in the third step of the chorismate pathway, which leads to the biosynthesis of aromatic amino acids. Catalyzes the cis-dehydration of 3-dehydroquinate (DHQ) and introduces the first double bond of the aromatic ring to yield 3-dehydroshikimate. The polypeptide is 3-dehydroquinate dehydratase (Thermoplasma volcanium (strain ATCC 51530 / DSM 4299 / JCM 9571 / NBRC 15438 / GSS1)).